The primary structure comprises 212 residues: MNLFRFLGDLSHLLAIILLLLKIWKSRSCAGISGKSQVLFAVVFTARYLDLFTNYISLYNTCMKVVYIACSFTTVWLIYSKFKATYDGNHDTFRVEFLVVPTAILAFLVNHDFTPLEILWTFSIYLESVAILPQLFMVSKTGEAETITSHYLFALGVYRTLYLFNWIWRYHFEGFFDLIAIVAGLVQTVLYCDFFYLYITKVLKGKKLSLPA.

Residues 1–4 (MNLF) lie on the Lumenal side of the membrane. A helical transmembrane segment spans residues 5 to 24 (RFLGDLSHLLAIILLLLKIW). Topologically, residues 25–32 (KSRSCAGI) are cytoplasmic. Residues 33-52 (SGKSQVLFAVVFTARYLDLF) form a helical membrane-spanning segment. Residues 47–48 (RY) form an interaction with the K-D-E-L motif on target proteins region. Over 53 to 58 (TNYISL) the chain is Lumenal. Residues 59–79 (YNTCMKVVYIACSFTTVWLIY) traverse the membrane as a helical segment. At 80–92 (SKFKATYDGNHDT) the chain is on the cytoplasmic side. The helical transmembrane segment at 93–110 (FRVEFLVVPTAILAFLVN) threads the bilayer. At 111–116 (HDFTPL) the chain is on the lumenal side. The helical transmembrane segment at 117–135 (EILWTFSIYLESVAILPQL) threads the bilayer. The Cytoplasmic segment spans residues 136 to 149 (FMVSKTGEAETITS). A helical membrane pass occupies residues 150-168 (HYLFALGVYRTLYLFNWIW). The segment at 159–169 (RTLYLFNWIWR) is interaction with the K-D-E-L motif on target proteins. Residues 169-178 (RYHFEGFFDL) lie on the Lumenal side of the membrane. The helical transmembrane segment at 179–199 (IAIVAGLVQTVLYCDFFYLYI) threads the bilayer. The Cytoplasmic segment spans residues 200-212 (TKVLKGKKLSLPA). An important for recycling of cargo proteins with the sequence motif K-D-E-L from the Golgi to the endoplasmic reticulum region spans residues 204-207 (KGKK). Phosphoserine; by PKA is present on Ser209.

It belongs to the ERD2 family. In terms of assembly, upon ligand binding the receptor oligomerizes and interacts with components of the transport machinery such as ARFGAP1 and ARF1. Phosphorylation by PKA at Ser-209 is required for endoplasmic reticulum retention function.

The protein resides in the golgi apparatus membrane. Its subcellular location is the cytoplasmic vesicle. It is found in the COPI-coated vesicle membrane. It localises to the endoplasmic reticulum membrane. The protein localises to the endoplasmic reticulum-Golgi intermediate compartment membrane. In terms of biological role, receptor for the C-terminal sequence motif K-D-E-L that is present on endoplasmic reticulum resident proteins and that mediates their recycling from the Golgi back to the endoplasmic reticulum. The protein is ER lumen protein-retaining receptor 1 (KDELR1) of Homo sapiens (Human).